Here is a 465-residue protein sequence, read N- to C-terminus: Hexokinase-4 (465 aa).

The Hexokinase domain occupies 10-454 (ATKKEKVEQI…SGRGAALVSA (445 aa)). Positions 67 to 203 (EGSEVGDFLS…DFEMDVVAMV (137 aa)) are hexokinase small subdomain. 78–83 (DLGGTN) lines the ATP pocket. Residues 151-152 (SF), 168-169 (TK), and 204-205 (ND) contribute to the substrate site. The tract at residues 204–443 (NDTVATMISC…CEITFIESEE (240 aa)) is hexokinase large subdomain. Thr-228 provides a ligand contact to ATP. Asn-231, Glu-256, and Glu-290 together coordinate substrate. Residues 295–296 (GK), 332–336 (TRFVS), and 411–415 (SVYKL) each bind ATP.

This sequence belongs to the hexokinase family. In terms of assembly, monomer. Interacts with MIDN; the interaction occurs preferentially at low glucose levels and results in inhibition of hexokinase activity. Interacts with GCKR; leading to sequestration in the nucleus. As to expression, expression is restricted to the liver and pancreatic islets (at protein level).

It is found in the cytoplasm. The protein localises to the nucleus. It localises to the mitochondrion. It carries out the reaction a D-hexose + ATP = a D-hexose 6-phosphate + ADP + H(+). The catalysed reaction is D-fructose + ATP = D-fructose 6-phosphate + ADP + H(+). The enzyme catalyses D-glucose + ATP = D-glucose 6-phosphate + ADP + H(+). It catalyses the reaction D-mannose + ATP = D-mannose 6-phosphate + ADP + H(+). The protein operates within carbohydrate metabolism; hexose metabolism. It participates in carbohydrate degradation; glycolysis; D-glyceraldehyde 3-phosphate and glycerone phosphate from D-glucose: step 1/4. Subject to allosteric regulation. Low glucose and high fructose-6-phosphate triggers association with the inhibitor GCKR followed by sequestration in the nucleus. Catalyzes the phosphorylation of hexose, such as D-glucose, D-fructose and D-mannose, to hexose 6-phosphate (D-glucose 6-phosphate, D-fructose 6-phosphate and D-mannose 6-phosphate, respectively). Compared to other hexokinases, has a weak affinity for D-glucose, and is effective only when glucose is abundant. Mainly expressed in pancreatic beta cells and the liver and constitutes a rate-limiting step in glucose metabolism in these tissues. Since insulin secretion parallels glucose metabolism and the low glucose affinity of GCK ensures that it can change its enzymatic activity within the physiological range of glucose concentrations, GCK acts as a glucose sensor in the pancreatic beta cell. In pancreas, plays an important role in modulating insulin secretion. In liver, helps to facilitate the uptake and conversion of glucose by acting as an insulin-sensitive determinant of hepatic glucose usage. Required to provide D-glucose 6-phosphate for the synthesis of glycogen. Mediates the initial step of glycolysis by catalyzing phosphorylation of D-glucose to D-glucose 6-phosphate. This chain is Hexokinase-4, found in Rattus norvegicus (Rat).